Consider the following 1139-residue polypeptide: Retinoblastoma-like protein 2 (1139 aa).

The segment at 1–45 (MPSGGDQSPPPPPPPPAAAASDEEEEDDGEAEDAAPPAESPTPQI) is disordered. The span at 8–17 (SPPPPPPPPA) shows a compositional bias: pro residues. The segment covering 21-33 (SDEEEEDDGEAED) has biased composition (acidic residues). Residue S413 is modified to Phosphoserine. T417 carries the phosphothreonine modification. Residues 417–616 (TPVSTATHSL…EKIRDNENRV (200 aa)) are domain A. Positions 417-1024 (TPVSTATHSL…KQIKTFAMKY (608 aa)) are pocket; binds E1A. The O-linked (GlcNAc) serine glycan is linked to S420. Positions 617–827 (PTCEEVMPPQ…KQGQSVTSSS (211 aa)) are spacer. S639 is modified (phosphoserine). T642 bears the Phosphothreonine mark. The interval 654 to 678 (GGLGRSITSPTTLYDRYSSPPASTT) is disordered. Phosphoserine occurs at positions 662, 672, and 688. The span at 810 to 827 (ISPGGQQQKQGQSVTSSS) shows a compositional bias: low complexity. Disordered stretches follow at residues 810–831 (ISPGGQQQKQGQSVTSSSNRPR) and 933–999 (KGKR…DMEE). The domain B stretch occupies residues 828–1024 (NRPRKTSSLS…KQIKTFAMKY (197 aa)). Positions 941–955 (SGSSDSRSHQNSPTE) are enriched in polar residues. Residues S948, S952, S966, S971, S972, and S973 each carry the phosphoserine modification. Residues 964-973 (DSSPVMRSSS) are compositionally biased toward low complexity. At T974 the chain carries Phosphothreonine. Positions 977–987 (VPQPSSAPPTP) are enriched in pro residues. 2 positions are modified to phosphoserine: S981 and S982. The residue at position 986 (T986) is a Phosphothreonine. Residues S1035, S1068, S1080, and S1112 each carry the phosphoserine modification.

It belongs to the retinoblastoma protein (RB) family. Interacts with AATF. Interacts with KMT5B, KMT5C and USP4. Component of the DREAM complex (also named LINC complex) at least composed of E2F4, E2F5, LIN9, LIN37, LIN52, LIN54, MYBL1, MYBL2, RBL1, RBL2, RBBP4, TFDP1 and TFDP2. The complex exists in quiescent cells where it represses cell cycle-dependent genes. It dissociates in S phase when LIN9, LIN37, LIN52 and LIN54 form a subcomplex that binds to MYBL2. Interacts with RINT1. Interacts with PML (isoform PML-1, isoform PML-2, isoform PML-3, isoform PML-4 and isoform PML-5). Interacts with RBBP9. Interacts with CD53. As to quaternary structure, (Microbial infection) Interacts with JC virus small t antigen. Post-translationally, during G0 and early G1 phase of the cell cycle, phosphorylated on Ser-639 and on 5 sites within the domain B. Phosphorylation on Ser-672 in G1 leads to its ubiquitin-dependent proteolysis.

It localises to the nucleus. In terms of biological role, key regulator of entry into cell division. Directly involved in heterochromatin formation by maintaining overall chromatin structure and, in particular, that of constitutive heterochromatin by stabilizing histone methylation. Recruits and targets histone methyltransferases KMT5B and KMT5C, leading to epigenetic transcriptional repression. Controls histone H4 'Lys-20' trimethylation. Probably acts as a transcription repressor by recruiting chromatin-modifying enzymes to promoters. Potent inhibitor of E2F-mediated trans-activation, associates preferentially with E2F5. Binds to cyclins A and E. Binds to and may be involved in the transforming capacity of the adenovirus E1A protein. May act as a tumor suppressor. This Homo sapiens (Human) protein is Retinoblastoma-like protein 2 (RBL2).